The chain runs to 283 residues: Adenylate dimethylallyltransferase (283 aa).

Belongs to the isopentenyl transferase family.

The catalysed reaction is dimethylallyl diphosphate + AMP = N(6)-(dimethylallyl)adenosine 5'-phosphate + diphosphate. Transfers dimethylallyl groups to AMP as part of the biosynthesis of cytokinin phytohormones like isopentenyl adenine or discadenine which controle spore formation and viability. This is Adenylate dimethylallyltransferase (iptA) from Dictyostelium discoideum (Social amoeba).